The following is a 460-amino-acid chain: Argininosuccinate lyase (460 aa).

This sequence belongs to the lyase 1 family. Argininosuccinate lyase subfamily.

It localises to the cytoplasm. It carries out the reaction 2-(N(omega)-L-arginino)succinate = fumarate + L-arginine. The protein operates within amino-acid biosynthesis; L-arginine biosynthesis; L-arginine from L-ornithine and carbamoyl phosphate: step 3/3. The protein is Argininosuccinate lyase of Parvibaculum lavamentivorans (strain DS-1 / DSM 13023 / NCIMB 13966).